We begin with the raw amino-acid sequence, 1142 residues long: Zinc finger MYM-type protein 1 (1142 aa).

A Glycyl lysine isopeptide (Lys-Gly) (interchain with G-Cter in SUMO2) cross-link involves residue K25. 3 MYM-type zinc fingers span residues 110-148, 160-203, and 210-245; these read QLFC…PKDV, KTFC…QYEV, and HNLC…SSSL. A Glycyl lysine isopeptide (Lys-Gly) (interchain with G-Cter in SUMO2) cross-link involves residue K284. The segment at 300-331 adopts an MYM-type 4 zinc-finger fold; that stretch reads ELFCSINCFSAYSKAKMESSSVSVVSVVHDTS. A compositionally biased stretch (polar residues) spans 385–396; sequence KSSPSEPSNAVA. Positions 385–413 are disordered; sequence KSSPSEPSNAVASSSTEQPSVSPSSSVFS. Residues 397–413 show a composition bias toward low complexity; sequence SSSTEQPSVSPSSSVFS. A TTF-type zinc finger spans residues 452–538; that stretch reads KSRSIKKSCC…YQFCDGAVSD (87 aa).

The protein resides in the nucleus. The sequence is that of Zinc finger MYM-type protein 1 (ZMYM1) from Homo sapiens (Human).